Consider the following 479-residue polypeptide: Glucagon receptor (479 aa).

A signal peptide spans 1 to 25 (MPPARLRHPHLLLLLLLACQPQAPA). Residues 26-136 (AQAMDFLFQK…ELGVQREVAE (111 aa)) lie on the Extracellular side of the membrane. Intrachain disulfides connect cysteine 43–cysteine 67, cysteine 58–cysteine 100, and cysteine 81–cysteine 121. 5 N-linked (GlcNAc...) asparagine glycosylation sites follow: asparagine 46, asparagine 59, asparagine 74, asparagine 78, and asparagine 117. Residues 137-161 (MYSSFQAMYTAGYSLSLAALLLALA) traverse the membrane as a helical segment. The Cytoplasmic portion of the chain corresponds to 162–173 (ILLGLSKLHCTR). A helical membrane pass occupies residues 174–198 (NYIHANLLASFVLRASSVLALDALL). At 199-225 (KTRYSQRLGDDLSVSIWLSDEAVAGCR) the chain is on the extracellular side. An intrachain disulfide couples cysteine 224 to cysteine 294. A helical transmembrane segment spans residues 226-249 (VAAVFMQYGVVANYCWLLVEGVYL). At 250–263 (HSLLRQATIPERSC) the chain is on the cytoplasmic side. The helical transmembrane segment at 264–285 (FPLYLAIGWGAPMLFVIPWAVV) threads the bilayer. Residues 286–303 (KCLFENIQCWTSNDNMGF) are Extracellular-facing. A helical transmembrane segment spans residues 304–326 (WWILRFPVFLAILINFSIFIRVL). The Cytoplasmic portion of the chain corresponds to 327–350 (HVLVAKLRAHQMRCTDYKFRLARS). A helical membrane pass occupies residues 351–369 (TLTLIPLLGVHEVVFAFVT). The Extracellular segment spans residues 370–381 (DEHAQGALRSAK). The chain crosses the membrane as a helical span at residues 382–402 (LFFDLFLSSFQGLLVAVLYCF). Residues 403 to 479 (LNKEVQAELL…GLPGVAENPF (77 aa)) lie on the Cytoplasmic side of the membrane. Residues 426 to 479 (KAHRVGSHSARPPSGPPSEKLLLSTGGSSNGTSQEPSAETHLASGLPGVAENPF) are disordered. Residues 446-458 (LLLSTGGSSNGTS) show a composition bias toward low complexity. Position 458 is a phosphoserine (serine 458).

This sequence belongs to the G-protein coupled receptor 2 family. In terms of processing, ligand-binding promotes phosphorylation of serine residues in the C-terminal cytoplasmic domain. Phosphorylation is important for receptor endocytosis after ligand-binding.

It is found in the cell membrane. Its function is as follows. G-protein coupled receptor for glucagon that plays a central role in the regulation of blood glucose levels and glucose homeostasis. Regulates the rate of hepatic glucose production by promoting glycogen hydrolysis and gluconeogenesis. Plays an important role in mediating the responses to fasting. Ligand binding causes a conformation change that triggers signaling via guanine nucleotide-binding proteins (G proteins) and modulates the activity of down-stream effectors, such as adenylate cyclase. Promotes activation of adenylate cyclase. Besides, plays a role in signaling via a phosphatidylinositol-calcium second messenger system. This chain is Glucagon receptor, found in Sus scrofa (Pig).